The chain runs to 337 residues: Glyceraldehyde-3-phosphate dehydrogenase (337 aa).

NAD(+) is bound by residues 12–13 (RI), Asp-34, and Lys-79. D-glyceraldehyde 3-phosphate contacts are provided by residues 150 to 152 (SCT), Thr-181, 210 to 211 (TG), and Arg-233. The active-site Nucleophile is the Cys-151. Asn-315 contributes to the NAD(+) binding site.

This sequence belongs to the glyceraldehyde-3-phosphate dehydrogenase family. In terms of assembly, homotetramer. As to expression, expressed in all tissues examined.

It localises to the cytoplasm. The catalysed reaction is D-glyceraldehyde 3-phosphate + phosphate + NAD(+) = (2R)-3-phospho-glyceroyl phosphate + NADH + H(+). It participates in carbohydrate degradation; glycolysis; pyruvate from D-glyceraldehyde 3-phosphate: step 1/5. The sequence is that of Glyceraldehyde-3-phosphate dehydrogenase (gpd) from Lentinula edodes (Shiitake mushroom).